Reading from the N-terminus, the 316-residue chain is dTDP-4-dehydro-6-deoxyglucose reductase (316 aa).

16-17 contributes to the NAD(+) binding site; it reads FI. Residue Y151 is the Proton acceptor of the active site. K155 contacts NAD(+).

Belongs to the NAD(P)-dependent epimerase/dehydratase family.

The enzyme catalyses dTDP-alpha-D-fucose + NAD(+) = dTDP-4-dehydro-6-deoxy-alpha-D-glucose + NADH + H(+). It catalyses the reaction dTDP-alpha-D-fucose + NADP(+) = dTDP-4-dehydro-6-deoxy-alpha-D-glucose + NADPH + H(+). It participates in bacterial outer membrane biogenesis; LPS O-antigen biosynthesis. Inhibited by Cu(2+), while other divalent cations such as Ca(2+), Co(2+), Fe(2+), Mn(2+) and Mg(2+) have no obvious effects on enzyme activity. Functionally, catalyzes the stereospecific reduction of the C-4 keto group of dTDP-4-dehydro-6-deoxy-D-glucose, leading to dTDP-D-fucopyranose. This is a step in the biosynthesis of D-fucofuranose, a component of E.coli O52 O antigen. Is more efficient using NADH than NADPH as cosubstrate. This chain is dTDP-4-dehydro-6-deoxyglucose reductase (fcf1), found in Escherichia coli.